Consider the following 428-residue polypeptide: Adenylosuccinate synthetase (428 aa).

Residues 11 to 17 and 39 to 41 contribute to the GTP site; these read GDEGKGK and GHT. D12 (proton acceptor) is an active-site residue. Residues D12 and G39 each contribute to the Mg(2+) site. IMP-binding positions include 12–15, 37–40, T130, R144, N226, T241, and R305; these read DEGK and NAGH. The Proton donor role is filled by H40. Substrate is bound at residue 301 to 307; sequence VTTGRKR. GTP-binding positions include R307, 333 to 335, and 415 to 417; these read KLD and GTG.

It belongs to the adenylosuccinate synthetase family. As to quaternary structure, homodimer. Mg(2+) serves as cofactor.

The protein localises to the cytoplasm. The enzyme catalyses IMP + L-aspartate + GTP = N(6)-(1,2-dicarboxyethyl)-AMP + GDP + phosphate + 2 H(+). Its pathway is purine metabolism; AMP biosynthesis via de novo pathway; AMP from IMP: step 1/2. Plays an important role in the de novo pathway and in the salvage pathway of purine nucleotide biosynthesis. Catalyzes the first committed step in the biosynthesis of AMP from IMP. The protein is Adenylosuccinate synthetase of Candida tropicalis (strain ATCC MYA-3404 / T1) (Yeast).